The sequence spans 227 residues: Thymidylate kinase (227 aa).

16–23 (GIDGAGKT) provides a ligand contact to ATP.

Belongs to the thymidylate kinase family.

The enzyme catalyses dTMP + ATP = dTDP + ADP. Functionally, phosphorylation of dTMP to form dTDP in both de novo and salvage pathways of dTTP synthesis. This chain is Thymidylate kinase, found in Xanthomonas oryzae pv. oryzae (strain MAFF 311018).